The following is a 210-amino-acid chain: Dephospho-CoA kinase (210 aa).

The region spanning 15-210 (VLGLTGGIGC…HKGYLKLALK (196 aa)) is the DPCK domain. 23 to 28 (GCGKTA) contributes to the ATP binding site.

The protein belongs to the CoaE family.

Its subcellular location is the cytoplasm. The enzyme catalyses 3'-dephospho-CoA + ATP = ADP + CoA + H(+). Its pathway is cofactor biosynthesis; coenzyme A biosynthesis; CoA from (R)-pantothenate: step 5/5. Functionally, catalyzes the phosphorylation of the 3'-hydroxyl group of dephosphocoenzyme A to form coenzyme A. The protein is Dephospho-CoA kinase of Pseudoalteromonas translucida (strain TAC 125).